The following is a 394-amino-acid chain: Dual-specificity RNA methyltransferase RlmN (394 aa).

The active-site Proton acceptor is the Glu116. Residues 122–365 enclose the Radical SAM core domain; it reads EEDRGTLCVS…SPIRTPRGED (244 aa). Cys129 and Cys370 form a disulfide bridge. The [4Fe-4S] cluster site is built by Cys136, Cys140, and Cys143. Residues 196–197, Ser228, 250–252, and Asn327 contribute to the S-adenosyl-L-methionine site; these read GE and SFH. Residue Cys370 is the S-methylcysteine intermediate of the active site.

This sequence belongs to the radical SAM superfamily. RlmN family. The cofactor is [4Fe-4S] cluster.

The protein localises to the cytoplasm. The enzyme catalyses adenosine(2503) in 23S rRNA + 2 reduced [2Fe-2S]-[ferredoxin] + 2 S-adenosyl-L-methionine = 2-methyladenosine(2503) in 23S rRNA + 5'-deoxyadenosine + L-methionine + 2 oxidized [2Fe-2S]-[ferredoxin] + S-adenosyl-L-homocysteine. It catalyses the reaction adenosine(37) in tRNA + 2 reduced [2Fe-2S]-[ferredoxin] + 2 S-adenosyl-L-methionine = 2-methyladenosine(37) in tRNA + 5'-deoxyadenosine + L-methionine + 2 oxidized [2Fe-2S]-[ferredoxin] + S-adenosyl-L-homocysteine. Functionally, specifically methylates position 2 of adenine 2503 in 23S rRNA and position 2 of adenine 37 in tRNAs. m2A2503 modification seems to play a crucial role in the proofreading step occurring at the peptidyl transferase center and thus would serve to optimize ribosomal fidelity. In Dinoroseobacter shibae (strain DSM 16493 / NCIMB 14021 / DFL 12), this protein is Dual-specificity RNA methyltransferase RlmN.